The primary structure comprises 246 residues: Small ribosomal subunit protein uS2 (246 aa).

It belongs to the universal ribosomal protein uS2 family.

This chain is Small ribosomal subunit protein uS2, found in Pseudomonas aeruginosa (strain LESB58).